The following is a 427-amino-acid chain: MTTIVRIFGREILDSRGNPTVEADVYLADGSMGRAAVPSGASTGEHEAVELRDGDKGRYLGKGCLNAAKHINGEIATALHGKDATQQGEIDGAMIALDGTPNKGRLGANAILAVSMATARAAAAAQRTPLYRYLGGVGANTLPVPMMNIINGGAHADNSVDLQEFMVAPFGAKSFSEALRMGVEVFHTLKKVLSKKGYSTAVGDEGGFAPMLKSNEEAIESCLEAITQAGFKPGENVGICLDPASSEFFKGGKYVFKKSDKSERTSEQMVEFWANWVRQYPAILSIEDGMAEDDWAGWKLLTDTVGSKIQLVGDDLFVTNSTRLKQGIEGGVANSILVKVNQIGTLTETLEAMQMAANAGYTAVVSHRSGETEDPFIADLAVATNAGQIKTGSASRTDRICKYNQLLRIEERLGSSAVFPGRKAYSR.

Q163 serves as a coordination point for (2R)-2-phosphoglycerate. E205 (proton donor) is an active-site residue. Positions 242, 287, and 314 each coordinate Mg(2+). Residues K339, R368, S369, and K390 each contribute to the (2R)-2-phosphoglycerate site. The Proton acceptor role is filled by K339.

This sequence belongs to the enolase family. Mg(2+) is required as a cofactor.

It is found in the cytoplasm. The protein localises to the secreted. It localises to the cell surface. It carries out the reaction (2R)-2-phosphoglycerate = phosphoenolpyruvate + H2O. Its pathway is carbohydrate degradation; glycolysis; pyruvate from D-glyceraldehyde 3-phosphate: step 4/5. Functionally, catalyzes the reversible conversion of 2-phosphoglycerate (2-PG) into phosphoenolpyruvate (PEP). It is essential for the degradation of carbohydrates via glycolysis. This chain is Enolase, found in Solibacter usitatus (strain Ellin6076).